A 355-amino-acid polypeptide reads, in one-letter code: Tryptophan--tRNA ligase (355 aa).

Residues 13–15 (QPT) and 21–22 (GN) each bind ATP. A 'HIGH' region motif is present at residues 14 to 22 (PTGNLHLGN). Asp137 contributes to the L-tryptophan binding site. ATP contacts are provided by residues 149-151 (GED), Ile208, and 217-221 (KMSKS). Positions 217-221 (KMSKS) match the 'KMSKS' region motif.

It belongs to the class-I aminoacyl-tRNA synthetase family. As to quaternary structure, homodimer.

The protein resides in the cytoplasm. The catalysed reaction is tRNA(Trp) + L-tryptophan + ATP = L-tryptophyl-tRNA(Trp) + AMP + diphosphate + H(+). Catalyzes the attachment of tryptophan to tRNA(Trp). In Brucella melitensis biotype 1 (strain ATCC 23456 / CCUG 17765 / NCTC 10094 / 16M), this protein is Tryptophan--tRNA ligase.